A 464-amino-acid chain; its full sequence is ATP synthase subunit beta (464 aa).

153 to 160 (GGAGVGKT) contributes to the ATP binding site.

It belongs to the ATPase alpha/beta chains family. In terms of assembly, F-type ATPases have 2 components, CF(1) - the catalytic core - and CF(0) - the membrane proton channel. CF(1) has five subunits: alpha(3), beta(3), gamma(1), delta(1), epsilon(1). CF(0) has three main subunits: a(1), b(2) and c(9-12). The alpha and beta chains form an alternating ring which encloses part of the gamma chain. CF(1) is attached to CF(0) by a central stalk formed by the gamma and epsilon chains, while a peripheral stalk is formed by the delta and b chains.

The protein localises to the cell membrane. The enzyme catalyses ATP + H2O + 4 H(+)(in) = ADP + phosphate + 5 H(+)(out). Its function is as follows. Produces ATP from ADP in the presence of a proton gradient across the membrane. The catalytic sites are hosted primarily by the beta subunits. This Clostridium novyi (strain NT) protein is ATP synthase subunit beta.